Consider the following 256-residue polypeptide: Gramicidin S biosynthesis protein GrsT (256 aa).

Residue S95 is part of the active site.

This sequence belongs to the thioesterase family.

It functions in the pathway antibiotic biosynthesis; gramicidin S biosynthesis. Its function is as follows. Probable thioesterase involved in the biosynthesis of gramicidin S. This chain is Gramicidin S biosynthesis protein GrsT (grsT), found in Aneurinibacillus migulanus (Bacillus migulanus).